A 456-amino-acid polypeptide reads, in one-letter code: Adenylosuccinate lyase (456 aa).

N(6)-(1,2-dicarboxyethyl)-AMP-binding positions include 15 to 16, 90 to 92, and 122 to 123; these read RY, NHD, and TS. Residue His-171 is the Proton donor/acceptor of the active site. Position 247 (Gln-247) interacts with N(6)-(1,2-dicarboxyethyl)-AMP. Ser-295 (proton donor/acceptor) is an active-site residue. N(6)-(1,2-dicarboxyethyl)-AMP-binding positions include Ser-296, 301 to 303, Asn-309, Arg-335, and 340 to 344; these read KVN and STVLR.

The protein belongs to the lyase 1 family. Adenylosuccinate lyase subfamily. Homotetramer. Residues from neighboring subunits contribute catalytic and substrate-binding residues to each active site.

It catalyses the reaction N(6)-(1,2-dicarboxyethyl)-AMP = fumarate + AMP. The catalysed reaction is (2S)-2-[5-amino-1-(5-phospho-beta-D-ribosyl)imidazole-4-carboxamido]succinate = 5-amino-1-(5-phospho-beta-D-ribosyl)imidazole-4-carboxamide + fumarate. Its pathway is purine metabolism; AMP biosynthesis via de novo pathway; AMP from IMP: step 2/2. The protein operates within purine metabolism; IMP biosynthesis via de novo pathway; 5-amino-1-(5-phospho-D-ribosyl)imidazole-4-carboxamide from 5-amino-1-(5-phospho-D-ribosyl)imidazole-4-carboxylate: step 2/2. Catalyzes two reactions in de novo purine nucleotide biosynthesis. Catalyzes the breakdown of 5-aminoimidazole- (N-succinylocarboxamide) ribotide (SAICAR or 2-[5-amino-1-(5-phospho-beta-D-ribosyl)imidazole-4-carboxamido]succinate) to 5-aminoimidazole-4-carboxamide ribotide (AICAR or 5-amino-1-(5-phospho-beta-D-ribosyl)imidazole-4-carboxamide) and fumarate, and of adenylosuccinate (ADS or N(6)-(1,2-dicarboxyethyl)-AMP) to adenosine monophosphate (AMP) and fumarate. The polypeptide is Adenylosuccinate lyase (purB) (Buchnera aphidicola subsp. Acyrthosiphon pisum (strain APS) (Acyrthosiphon pisum symbiotic bacterium)).